The sequence spans 962 residues: Alpha-glucan phosphorylase 1 (962 aa).

A chloroplast-targeting transit peptide spans 1–63 (MDTMRISGVS…RSFLSVKSIS (63 aa)). The disordered stretch occupies residues 525–552 (AKDAQNGVKTEQEEEKTAGEEEEDEVIP). The residue at position 808 (lysine 808) is an N6-(pyridoxal phosphate)lysine.

This sequence belongs to the glycogen phosphorylase family. The cofactor is pyridoxal 5'-phosphate.

Its subcellular location is the plastid. It is found in the chloroplast stroma. The catalysed reaction is [(1-&gt;4)-alpha-D-glucosyl](n) + phosphate = [(1-&gt;4)-alpha-D-glucosyl](n-1) + alpha-D-glucose 1-phosphate. Functionally, phosphorylase is an important allosteric enzyme in carbohydrate metabolism. Enzymes from different sources differ in their regulatory mechanisms and in their natural substrates. However, all known phosphorylases share catalytic and structural properties. May be not required for the degradation of starch, but the phosphorolysis of starch may play an important role in water stress tolerance. This chain is Alpha-glucan phosphorylase 1 (PHS1), found in Arabidopsis thaliana (Mouse-ear cress).